We begin with the raw amino-acid sequence, 257 residues long: Baramicin A1 (257 aa).

The N-terminal stretch at 1-19 is a signal peptide; the sequence is MKSFGLIALAICGVICVAA. Positions 20–21 are excised as a propeptide; it reads EP. Pyrrolidone carboxylic acid is present on glutamine 22. The disordered stretch occupies residues 95–122; the sequence is GPNFSAKNLGPNGAKSVGIPQRARRSPQ. N-linked (GlcNAc...) asparagine glycosylation is present at asparagine 97. Positions 118-121 are excised as a propeptide; that stretch reads RRSP. Glutamine 122 bears the Pyrrolidone carboxylic acid mark. Positions 145-148 are excised as a propeptide; that stretch reads RRSP. Glutamine 149 bears the Pyrrolidone carboxylic acid mark. A propeptide spanning residues 172–175 is cleaved from the precursor; that stretch reads RRSP. Pyrrolidone carboxylic acid is present on glutamine 176. Positions 199 to 204 are excised as a propeptide; the sequence is RRGIND. N-linked (GlcNAc...) asparagine glycosylation occurs at asparagine 225.

Proteolytically cleaved. As to expression, hemolymph (at protein level).

It is found in the secreted. Secreted immune-induced peptides induced by Toll signaling. Has a significant role in resistance to infection by the entomopathogenic fungus B.bassiana R444 and weak antifungal activity against M.rileyi PHP1705. In adult males, activity appears to be important for neuromuscular processes that mediate correct wing posture upon Toll activation. The sequence is that of Baramicin A1 from Drosophila melanogaster (Fruit fly).